A 135-amino-acid chain; its full sequence is UPF0102 protein Mjls_1965 (135 aa).

The protein belongs to the UPF0102 family.

This Mycobacterium sp. (strain JLS) protein is UPF0102 protein Mjls_1965.